Here is a 551-residue protein sequence, read N- to C-terminus: Putative hydroxymethylpyrimidine/phosphomethylpyrimidine kinase 2 (551 aa).

Glu76 serves as a coordination point for 4-amino-5-hydroxymethyl-2-methylpyrimidine.

It in the N-terminal section; belongs to the ThiD family. This sequence in the C-terminal section; belongs to the thiaminase-2 family.

The protein localises to the cytoplasm. It carries out the reaction 4-amino-5-hydroxymethyl-2-methylpyrimidine + ATP = 4-amino-2-methyl-5-(phosphooxymethyl)pyrimidine + ADP + H(+). It catalyses the reaction 4-amino-2-methyl-5-(phosphooxymethyl)pyrimidine + ATP = 4-amino-2-methyl-5-(diphosphooxymethyl)pyrimidine + ADP. The protein operates within cofactor biosynthesis; thiamine diphosphate biosynthesis; 4-amino-2-methyl-5-diphosphomethylpyrimidine from 5-amino-1-(5-phospho-D-ribosyl)imidazole: step 2/3. It functions in the pathway cofactor biosynthesis; thiamine diphosphate biosynthesis; 4-amino-2-methyl-5-diphosphomethylpyrimidine from 5-amino-1-(5-phospho-D-ribosyl)imidazole: step 3/3. Its function is as follows. Catalyzes the phosphorylation of hydroxymethylpyrimidine phosphate (HMP-P) to HMP-PP, and of HMP to HMP-P. The polypeptide is Putative hydroxymethylpyrimidine/phosphomethylpyrimidine kinase 2 (Schizosaccharomyces pombe (strain 972 / ATCC 24843) (Fission yeast)).